The primary structure comprises 207 residues: 3-demethoxyubiquinol 3-hydroxylase (207 aa).

Residues Glu-56, Glu-86, His-89, Glu-138, Glu-170, and His-173 each coordinate Fe cation.

It belongs to the COQ7 family. The cofactor is Fe cation.

The protein localises to the cell membrane. It catalyses the reaction a 5-methoxy-2-methyl-3-(all-trans-polyprenyl)benzene-1,4-diol + AH2 + O2 = a 3-demethylubiquinol + A + H2O. It functions in the pathway cofactor biosynthesis; ubiquinone biosynthesis. In terms of biological role, catalyzes the hydroxylation of 2-nonaprenyl-3-methyl-6-methoxy-1,4-benzoquinol during ubiquinone biosynthesis. The protein is 3-demethoxyubiquinol 3-hydroxylase of Dechloromonas aromatica (strain RCB).